A 647-amino-acid chain; its full sequence is Macrolide export ATP-binding/permease protein MacB (647 aa).

Residues 7 to 245 (IRLEDICKTF…EATLQPHEEI (239 aa)) enclose the ABC transporter domain. 43–50 (GASGSGKS) contacts ATP. 4 helical membrane-spanning segments follow: residues 274–294 (VLTLLGIIIGVSSVVTMLAIG), 529–549 (VAAISLLVGGIGVMNIMLVSV), 573–593 (FIIEALSVSAIGGAIGVILGL), and 610–630 (FGPVLLAFACAFATGLIFGFL).

It belongs to the ABC transporter superfamily. Macrolide exporter (TC 3.A.1.122) family. In terms of assembly, homodimer.

The protein resides in the cell inner membrane. Its function is as follows. Non-canonical ABC transporter that contains transmembrane domains (TMD), which form a pore in the inner membrane, and an ATP-binding domain (NBD), which is responsible for energy generation. Confers resistance against macrolides. In Brucella melitensis biotype 1 (strain ATCC 23456 / CCUG 17765 / NCTC 10094 / 16M), this protein is Macrolide export ATP-binding/permease protein MacB.